The chain runs to 749 residues: Catalase-peroxidase 2 (749 aa).

The first 27 residues, 1 to 27 (MFKRTIPLFAAFTLAISPSVFPNYAYA), serve as a signal peptide directing secretion. Residues 107 to 229 (WHAAGTYRIY…LAATVMGLIY (123 aa)) constitute a cross-link (tryptophyl-tyrosyl-methioninium (Trp-Tyr) (with M-255)). Catalysis depends on His-108, which acts as the Proton acceptor. Residues 229 to 255 (YVNPEGPNGVPDPLAAAEKIRETFGRM) constitute a cross-link (tryptophyl-tyrosyl-methioninium (Tyr-Met) (with W-107)). Residue His-270 participates in heme b binding.

The protein belongs to the peroxidase family. Peroxidase/catalase subfamily. In terms of assembly, homodimer or homotetramer. Heme b is required as a cofactor. In terms of processing, formation of the three residue Trp-Tyr-Met cross-link is important for the catalase, but not the peroxidase activity of the enzyme.

The catalysed reaction is H2O2 + AH2 = A + 2 H2O. The enzyme catalyses 2 H2O2 = O2 + 2 H2O. Functionally, bifunctional enzyme with both catalase and broad-spectrum peroxidase activity. The protein is Catalase-peroxidase 2 of Legionella pneumophila (strain Paris).